The sequence spans 610 residues: POU domain, class 6, transcription factor 1 (610 aa).

Residues 55–87 (SSAGAAESGGDEEGSGQSLEATEEAQLDGPVTT) are disordered. The POU-specific domain occupies 448-522 (EEAINLEEIR…VLERWLAEAE (75 aa)). The segment at residues 543 to 602 (KRKRRTSFTPQAIEVLNTYFEKNSLPTGQEITEIAKELNYDREVVRVWFCNRRQTLKNTS) is a DNA-binding region (homeobox).

Belongs to the POU transcription factor family. Class-6 subfamily. In terms of tissue distribution, ubiquitously expressed during embryogenesis.

It is found in the nucleus. In terms of biological role, transcription factor that binds with high affinity to the motif 5'-TAATGARAT-3'. This chain is POU domain, class 6, transcription factor 1 (pou6f1), found in Danio rerio (Zebrafish).